The chain runs to 492 residues: Protein nucleotidyltransferase YdiU (492 aa).

8 residues coordinate ATP: Gly90, Gly92, Arg93, Lys113, Asp125, Gly126, Arg176, and Arg183. Asp252 serves as the catalytic Proton acceptor. Asn253 and Asp262 together coordinate Mg(2+). Residue Asp262 participates in ATP binding.

This sequence belongs to the SELO family. Mg(2+) serves as cofactor. Requires Mn(2+) as cofactor.

The enzyme catalyses L-seryl-[protein] + ATP = 3-O-(5'-adenylyl)-L-seryl-[protein] + diphosphate. The catalysed reaction is L-threonyl-[protein] + ATP = 3-O-(5'-adenylyl)-L-threonyl-[protein] + diphosphate. It carries out the reaction L-tyrosyl-[protein] + ATP = O-(5'-adenylyl)-L-tyrosyl-[protein] + diphosphate. It catalyses the reaction L-histidyl-[protein] + UTP = N(tele)-(5'-uridylyl)-L-histidyl-[protein] + diphosphate. The enzyme catalyses L-seryl-[protein] + UTP = O-(5'-uridylyl)-L-seryl-[protein] + diphosphate. The catalysed reaction is L-tyrosyl-[protein] + UTP = O-(5'-uridylyl)-L-tyrosyl-[protein] + diphosphate. Functionally, nucleotidyltransferase involved in the post-translational modification of proteins. It can catalyze the addition of adenosine monophosphate (AMP) or uridine monophosphate (UMP) to a protein, resulting in modifications known as AMPylation and UMPylation. The polypeptide is Protein nucleotidyltransferase YdiU (Thioalkalivibrio sulfidiphilus (strain HL-EbGR7)).